Reading from the N-terminus, the 362-residue chain is Putative gustatory receptor 89a (362 aa).

Topologically, residues 1 to 38 (MLRFPHVCGLCLLLKYWQILALAPFRTSEPMVARCQRW) are cytoplasmic. Residues 39 to 59 (MTLIAVFRWLLLTSMAPFVLW) traverse the membrane as a helical segment. Residues 60–74 (KSAAMYEATNVRHSM) lie on the Extracellular side of the membrane. Residues 75–95 (VFKTIALATMTGDVCISLALL) traverse the membrane as a helical segment. Residues 96-126 (GNHLWNRRELANLVNDLARLHRRRRLSWWST) are Cytoplasmic-facing. Residues 127–147 (LFLWLKLLLSLYDLLCSVPFL) traverse the membrane as a helical segment. The Extracellular portion of the chain corresponds to 148–166 (KGAGGRLPWSQLVAYGVQL). Residues 167-187 (YFQHVASVYGNGIFGGILLML) form a helical membrane-spanning segment. Topologically, residues 188–223 (ECYNQLEREEPTNLARLLQKEYSWLRLIQRFVKLFQ) are cytoplasmic. A helical transmembrane segment spans residues 224–244 (LGIFLLVLGSFVNIMVNIYAF). Topologically, residues 245–255 (MSYYVSLHGVP) are extracellular. Residues 256–276 (LTISNNCLVLAIQLYAVILAA) form a helical membrane-spanning segment. Residues 277–333 (HLCQVRSAKLRKKCLQLEYVPEGLTQEQAMASTPFPVLTPTGNVKFRILGVFILDNS) are Cytoplasmic-facing. The chain crosses the membrane as a helical span at residues 334–354 (FWLFLVSYAMNFIVVILQTSF). Topologically, residues 355–362 (EHINHGEI) are extracellular.

This sequence belongs to the insect chemoreceptor superfamily. Gustatory receptor (GR) family. Gr77a subfamily.

The protein resides in the cell membrane. Its function is as follows. Probable gustatory receptor which mediates acceptance or avoidance behavior, depending on its substrates. This Drosophila melanogaster (Fruit fly) protein is Putative gustatory receptor 89a (Gr89a).